The primary structure comprises 473 residues: O-methyltransferase ARMGADRAFT_1088206 (473 aa).

Residues 276–277, D299, 330–331, and R348 contribute to the S-adenosyl-L-methionine site; these read AG and DM. The active-site Proton acceptor is H352.

This sequence belongs to the class I-like SAM-binding methyltransferase superfamily. Cation-independent O-methyltransferase family.

It participates in secondary metabolite biosynthesis. Its function is as follows. O-methyltransferase, part of the gene cluster that mediates the biosynthesis of melleolides, a range of antifungal and phytotoxic polyketide derivatives composed of an orsellinic acid (OA) moiety esterified to various sesquiterpene alcohols. The first step in melleolides biosynthesis is performed by the delta(6)-protoilludene synthase PRO1 which catalyzes the cyclization of farnesyl diphosphate to protoilludene. The orsellinic acid synthase armB produces OA by condensing acetyl-CoA with 3 malonyl-CoA units in a three-round chain elongation reaction folowed by a C2-C7 ring closure. ArmB further catalyzes the trans-esterification of OA to the various sesquiterpene alcohols resulting from the hydroxylation of protoilludene. The melleolides cluster also includes 5 cytochrome P450 monooxygenases, 4 NAD(+)-dependent oxidoreductases, one flavin-dependent oxidoreductase, and one O-methyltransferase. The cytochrome P450 monooxygenases may be involved in protoilludene hydroxylation to elaborate melleolides with multiple alcohol groups, such as melleolide D, which carries alcohol functionalities at C-4, C-5, C-10, and C-13. The role of the NAD(+)-dependent enzymes remains unknown. Numerous melleolides, including arnamial, show 5'-O-methylation of the aromatic moiety which may be catalyzed by the methyltransferase encoded in the cluster. The flavin-dependent oxidoreductase might represent the dehydrogenase yielding the aldehyde in position 1 of arnamial and other melleolides. Finally, several halogenase localized outside of the cluster, are able to catalyze the transfer of a single chlorine atom to the melleolide backbone, resulting in a 6'-chloromelleolide product. This Armillaria gallica (Bulbous honey fungus) protein is O-methyltransferase ARMGADRAFT_1088206.